We begin with the raw amino-acid sequence, 523 residues long: Protein tweety homolog 3 (523 aa).

Residues methionine 1–alanine 42 are Extracellular-facing. Residues leucine 43 to phenylalanine 63 traverse the membrane as a helical segment. The Cytoplasmic portion of the chain corresponds to tyrosine 64–threonine 86. A helical membrane pass occupies residues alanine 87 to glycine 107. At asparagine 108–leucine 211 the chain is on the extracellular side. 2 residues coordinate Ca(2+): glutamate 110 and aspartate 113. N-linked (GlcNAc...) asparagine glycans are attached at residues asparagine 126 and asparagine 144. The chain crosses the membrane as a helical span at residues glycine 212–isoleucine 232. At arginine 233–lysine 236 the chain is on the cytoplasmic side. A helical transmembrane segment spans residues glycine 237–leucine 257. At glycine 258–glutamate 386 the chain is on the extracellular side. Disulfide bonds link cysteine 271–cysteine 381 and cysteine 299–cysteine 366. Asparagine 351 carries N-linked (GlcNAc...) asparagine glycosylation. Residues glycine 387–cysteine 407 form a helical membrane-spanning segment. Residues serine 408–histidine 523 are Cytoplasmic-facing. Disordered regions lie at residues tryptophan 413–histidine 435 and glutamine 482–histidine 523. Residue serine 496 is modified to Phosphoserine. A PY-motif; mediates interaction with NEDD4L motif is present at residues proline 498 to tyrosine 501. Positions tyrosine 501–histidine 523 are enriched in polar residues. A phosphoserine mark is found at serine 504 and serine 522.

Belongs to the tweety family. As to quaternary structure, homotetramer; disulfide-linked. Homodimer. Interacts with NEDD4L. In terms of processing, ubiquitinated by NEDD4L. Post-translationally, N-Glycosylated. Contains high-mannose, hybrid and complex oligosaccharides. In terms of tissue distribution, expressed in excitable tissues. Expressed in the brain, heart, skeletal muscle, colon, spleen, kidney and peripheral blood leukocytes.

It localises to the cell membrane. It catalyses the reaction chloride(in) = chloride(out). It carries out the reaction L-glutamate(out) = L-glutamate(in). In terms of biological role, calcium-independent, swelling-dependent volume-regulated anion channel (VRAC-swell) which plays a pivotal role in the process of regulatory volume decrease (RVD) in the brain through the efflux of anions like chloride and organic osmolytes like glutamate. Probable large-conductance Ca(2+)-activated chloride channel. The polypeptide is Protein tweety homolog 3 (TTYH3) (Homo sapiens (Human)).